Reading from the N-terminus, the 127-residue chain is Glycine cleavage system H protein (127 aa).

The 82-residue stretch at 24-105 (TALVGITDFA…YNDGWLVKMK (82 aa)) folds into the Lipoyl-binding domain. The residue at position 65 (Lys65) is an N6-lipoyllysine.

Belongs to the GcvH family. The glycine cleavage system is composed of four proteins: P, T, L and H. The cofactor is (R)-lipoate.

Its function is as follows. The glycine cleavage system catalyzes the degradation of glycine. The H protein shuttles the methylamine group of glycine from the P protein to the T protein. This is Glycine cleavage system H protein from Pelodictyon phaeoclathratiforme (strain DSM 5477 / BU-1).